The chain runs to 369 residues: 3-dehydroquinate synthase (369 aa).

NAD(+) contacts are provided by residues 72 to 77 (SGEKEK), 130 to 131 (TT), lysine 142, and lysine 151. 3 residues coordinate Zn(2+): glutamate 184, histidine 247, and histidine 264.

This sequence belongs to the sugar phosphate cyclases superfamily. Dehydroquinate synthase family. The cofactor is Co(2+). Requires Zn(2+) as cofactor. NAD(+) is required as a cofactor.

The protein localises to the cytoplasm. The catalysed reaction is 7-phospho-2-dehydro-3-deoxy-D-arabino-heptonate = 3-dehydroquinate + phosphate. It functions in the pathway metabolic intermediate biosynthesis; chorismate biosynthesis; chorismate from D-erythrose 4-phosphate and phosphoenolpyruvate: step 2/7. In terms of biological role, catalyzes the conversion of 3-deoxy-D-arabino-heptulosonate 7-phosphate (DAHP) to dehydroquinate (DHQ). This Bacillus cytotoxicus (strain DSM 22905 / CIP 110041 / 391-98 / NVH 391-98) protein is 3-dehydroquinate synthase.